We begin with the raw amino-acid sequence, 197 residues long: Negative modulator of initiation of replication (197 aa).

Interaction with DNA stretches follow at residues 100-101 (AV), 129-133 (RTRVY), and 163-169 (NTNSGRK).

The protein belongs to the SeqA family. Homodimer. Polymerizes to form helical filaments.

The protein resides in the cytoplasm. In terms of biological role, negative regulator of replication initiation, which contributes to regulation of DNA replication and ensures that replication initiation occurs exactly once per chromosome per cell cycle. Binds to pairs of hemimethylated GATC sequences in the oriC region, thus preventing assembly of replication proteins and re-initiation at newly replicated origins. Repression is relieved when the region becomes fully methylated. This is Negative modulator of initiation of replication from Haemophilus influenzae (strain ATCC 51907 / DSM 11121 / KW20 / Rd).